A 253-amino-acid chain; its full sequence is Succinate dehydrogenase [ubiquinone] iron-sulfur subunit, mitochondrial (253 aa).

Positions 23–114 (FKIYRWNPDK…TTKIYPLPHM (92 aa)) constitute a 2Fe-2S ferredoxin-type domain. The [2Fe-2S] cluster site is built by Cys74, Cys79, Cys82, and Cys94. The region spanning 156 to 186 (DRKKLDGLYECILCACCSTSCPSYWWNQEEY) is the 4Fe-4S ferredoxin-type domain. 3 residues coordinate [4Fe-4S] cluster: Cys166, Cys169, and Cys172. Cys176 lines the [3Fe-4S] cluster pocket. An a ubiquinone-binding site is contributed by Trp181. Residues Cys223 and Cys229 each coordinate [3Fe-4S] cluster. Cys233 provides a ligand contact to [4Fe-4S] cluster.

This sequence belongs to the succinate dehydrogenase/fumarate reductase iron-sulfur protein family. In terms of assembly, component of complex II composed of four subunits: a flavoprotein (FP), an iron-sulfur protein (IP), and a cytochrome b composed of a large and a small subunit. It depends on [2Fe-2S] cluster as a cofactor. [3Fe-4S] cluster is required as a cofactor. The cofactor is [4Fe-4S] cluster.

Its subcellular location is the mitochondrion inner membrane. The enzyme catalyses a quinone + succinate = fumarate + a quinol. It participates in carbohydrate metabolism; tricarboxylic acid cycle; fumarate from succinate (eukaryal route): step 1/1. Its function is as follows. Iron-sulfur protein (IP) subunit of succinate dehydrogenase (SDH) that is involved in complex II of the mitochondrial electron transport chain and is responsible for transferring electrons from succinate to ubiquinone (coenzyme Q). The sequence is that of Succinate dehydrogenase [ubiquinone] iron-sulfur subunit, mitochondrial (SDH2) from Candida glabrata (strain ATCC 2001 / BCRC 20586 / JCM 3761 / NBRC 0622 / NRRL Y-65 / CBS 138) (Yeast).